The chain runs to 188 residues: Ribosome hibernation promotion factor (188 aa).

The tract at residues 93 to 125 (KTRVNRKKRKESEHEPFPATPETPPETAVDHDK) is disordered.

The protein belongs to the HPF/YfiA ribosome-associated protein family. Long HPF subfamily. Interacts with 100S ribosomes.

The protein localises to the cytoplasm. In terms of biological role, required for dimerization of active 70S ribosomes into 100S ribosomes in stationary phase; 100S ribosomes are translationally inactive and sometimes present during exponential growth. The chain is Ribosome hibernation promotion factor from Staphylococcus carnosus (strain TM300).